The chain runs to 208 residues: Large ribosomal subunit protein uL4 (208 aa).

Residues 45–96 (RQGTHKSKTRAEVRGGGRKPYRQKGTGNARQGSTRSPLMVGGGTIFGPTPHG) form a disordered region. The span at 69–80 (GTGNARQGSTRS) shows a compositional bias: polar residues.

Belongs to the universal ribosomal protein uL4 family. In terms of assembly, part of the 50S ribosomal subunit.

Functionally, one of the primary rRNA binding proteins, this protein initially binds near the 5'-end of the 23S rRNA. It is important during the early stages of 50S assembly. It makes multiple contacts with different domains of the 23S rRNA in the assembled 50S subunit and ribosome. Its function is as follows. Forms part of the polypeptide exit tunnel. This Chlorobium phaeovibrioides (strain DSM 265 / 1930) (Prosthecochloris vibrioformis (strain DSM 265)) protein is Large ribosomal subunit protein uL4.